Consider the following 260-residue polypeptide: uncharacterized protein (260 aa).

Residues 1 to 22 (MGYLKRFALYISILVLIVMVAG) form the signal peptide. Cysteine 23 is lipidated: N-palmitoyl cysteine. Cysteine 23 carries S-diacylglycerol cysteine lipidation.

The protein belongs to the staphylococcal tandem lipoprotein family.

It is found in the cell membrane. This is an uncharacterized protein from Staphylococcus aureus (strain bovine RF122 / ET3-1).